A 475-amino-acid chain; its full sequence is Glutamate--tRNA ligase 2 (475 aa).

A 'HIGH' region motif is present at residues 11–21 (PSPTGFLHIGG). The span at 116-133 (AEGRPPRYDGTWRDKDPA) shows a compositional bias: basic and acidic residues. The interval 116 to 137 (AEGRPPRYDGTWRDKDPAEAPS) is disordered. The 'KMSKS' region motif lies at 240–244 (KLSKR). An ATP-binding site is contributed by lysine 243.

The protein belongs to the class-I aminoacyl-tRNA synthetase family. Glutamate--tRNA ligase type 1 subfamily. In terms of assembly, monomer.

It is found in the cytoplasm. The enzyme catalyses tRNA(Glu) + L-glutamate + ATP = L-glutamyl-tRNA(Glu) + AMP + diphosphate. Functionally, catalyzes the attachment of glutamate to tRNA(Glu) in a two-step reaction: glutamate is first activated by ATP to form Glu-AMP and then transferred to the acceptor end of tRNA(Glu). The protein is Glutamate--tRNA ligase 2 of Chelativorans sp. (strain BNC1).